The sequence spans 387 residues: Mannitol-1-phosphate 5-dehydrogenase (387 aa).

NAD(+) is bound at residue Ala3 to Gly14.

This sequence belongs to the mannitol dehydrogenase family.

It catalyses the reaction D-mannitol 1-phosphate + NAD(+) = beta-D-fructose 6-phosphate + NADH + H(+). The sequence is that of Mannitol-1-phosphate 5-dehydrogenase from Yersinia pestis bv. Antiqua (strain Antiqua).